Consider the following 208-residue polypeptide: Large ribosomal subunit protein uL4 (208 aa).

The interval 51–79 (AKERAEVSFSTKKLKKQKGTGGARAGSRK) is disordered.

The protein belongs to the universal ribosomal protein uL4 family. As to quaternary structure, part of the 50S ribosomal subunit.

In terms of biological role, one of the primary rRNA binding proteins, this protein initially binds near the 5'-end of the 23S rRNA. It is important during the early stages of 50S assembly. It makes multiple contacts with different domains of the 23S rRNA in the assembled 50S subunit and ribosome. Functionally, forms part of the polypeptide exit tunnel. The protein is Large ribosomal subunit protein uL4 of Cytophaga hutchinsonii (strain ATCC 33406 / DSM 1761 / CIP 103989 / NBRC 15051 / NCIMB 9469 / D465).